Consider the following 361-residue polypeptide: Phosphoserine aminotransferase (361 aa).

Arg-43 contacts L-glutamate. Pyridoxal 5'-phosphate is bound by residues 77-78, Trp-103, Thr-152, Asp-172, and Gln-195; that span reads AS. Lys-196 bears the N6-(pyridoxal phosphate)lysine mark. 237-238 provides a ligand contact to pyridoxal 5'-phosphate; sequence NT.

The protein belongs to the class-V pyridoxal-phosphate-dependent aminotransferase family. SerC subfamily. As to quaternary structure, homodimer. Pyridoxal 5'-phosphate is required as a cofactor.

Its subcellular location is the cytoplasm. The enzyme catalyses O-phospho-L-serine + 2-oxoglutarate = 3-phosphooxypyruvate + L-glutamate. It catalyses the reaction 4-(phosphooxy)-L-threonine + 2-oxoglutarate = (R)-3-hydroxy-2-oxo-4-phosphooxybutanoate + L-glutamate. Its pathway is amino-acid biosynthesis; L-serine biosynthesis; L-serine from 3-phospho-D-glycerate: step 2/3. The protein operates within cofactor biosynthesis; pyridoxine 5'-phosphate biosynthesis; pyridoxine 5'-phosphate from D-erythrose 4-phosphate: step 3/5. Catalyzes the reversible conversion of 3-phosphohydroxypyruvate to phosphoserine and of 3-hydroxy-2-oxo-4-phosphonooxybutanoate to phosphohydroxythreonine. This is Phosphoserine aminotransferase from Desulfatibacillum aliphaticivorans.